Reading from the N-terminus, the 565-residue chain is E3 ubiquitin-protein ligase ipaH7.8 (565 aa).

The segment at 1-22 (MFSVNNTHSSVSCSPSINSNST) is disordered. An interaction with target proteins region spans residues 1–262 (MFSVNNTHSS…YHGPQIYFSM (262 aa)). Residues 9-22 (SSVSCSPSINSNST) show a composition bias toward low complexity. 9 LRR repeats span residues 58 to 79 (QEAVLNLSDLNLTSLPELPKHI), 80 to 97 (SALIVENNKLTSLPKLPA), 98 to 119 (FLKELNADNNRLSVIPELPESL), 120 to 137 (TTLSVRSNQLENLPVLPN), 138 to 157 (HLTSLFVENNRLYNLPALPE), 158 to 179 (KLKFLHVYYNRLTTLPDLPDKL), 180 to 199 (EILCAQRNNLVTFPQFSDRN), 202 to 223 (RQKEYYFHFNQITTLPESFSQL), and 225 to 248 (SSYRINISGNPLSTRVLQSLQRLT). Residues 263-270 (SDGQQNTL) are linker. The segment at 271–565 (HRPLADAVTA…SENGSRLHHS (295 aa)) is E3 ubiquitin-protein ligase catalytic domain. In terms of domain architecture, NEL spans 273–565 (PLADAVTAWF…SENGSRLHHS (293 aa)). The active-site Glycyl thioester intermediate is the Cys357.

The protein belongs to the LRR-containing bacterial E3 ligase family. In terms of processing, ubiquitinated in the presence of host E1 ubiquitin-activating enzyme, E2 ubiquitin-conjugating enzyme and ubiquitin.

It is found in the secreted. Its subcellular location is the host cytoplasm. The enzyme catalyses S-ubiquitinyl-[E2 ubiquitin-conjugating enzyme]-L-cysteine + [acceptor protein]-L-lysine = [E2 ubiquitin-conjugating enzyme]-L-cysteine + N(6)-ubiquitinyl-[acceptor protein]-L-lysine.. Its pathway is protein modification; protein ubiquitination. In terms of biological role, E3 ubiquitin ligase effector protein that interferes with host's innate immunity. Functions to alter host cell physiology and promote bacterial survival in host tissues. Catalyzes ubiquitination of human gasdermins GSDMB and GSDMD, promoting their degradation by the proteasome, thereby preventing cell death. In contrast, activates host cell pyroptosis in mouse cells: catalyzes ubiquitination of mouse Nlrp1b allele 1 protein, releasing the cleaved C-terminal part of Nlrp1b, which polymerizes and forms the Nlrp1b inflammasome followed by host cell pyroptosis. Does not catalyze ubiquitination of mouse GSDMD. This Shigella flexneri protein is E3 ubiquitin-protein ligase ipaH7.8.